The sequence spans 313 residues: UDP-N-acetylglucosamine 3-dehydrogenase (313 aa).

NAD(+)-binding residues include histidine 13, leucine 14, and arginine 38.

The protein belongs to the Gfo/Idh/MocA family. As to quaternary structure, exists in multiple oligomeric states.

It catalyses the reaction UDP-N-acetyl-alpha-D-glucosamine + NAD(+) = UDP-2-acetamido-3-dehydro-2-deoxy-alpha-D-glucopyranose + NADH + H(+). Its pathway is bacterial outer membrane biogenesis; LPS lipid A biosynthesis. Functionally, oxidoreductase involved in the synthesis of 2,3-diamino-2,3-dideoxy-D-glucopyranose (GlcN3N), which is a component of lipid A in some species. Catalyzes the NAD(+)-dependent oxidation of the glucosamine 3-position of UDP-N-acetyl-glucosamine (UDP-GlcNAc) to a ketone moiety, forming UDP-2-acetamido-3-dehydro-2-deoxy-alpha-D-glucopyranose (UDP-3-oxo-GlcNAc). Is specific for UDP-GlcNAc, no activity is observed with UDP-glucose (UDP-Glc), UDP-glucoronic acid (UDP-GlcA), UDP-galactose (UDP-Gal) and UDP-N-acetylgalactosamine (UDP-GalNAc). Cannot use FAD(+) and NADP(+). The polypeptide is UDP-N-acetylglucosamine 3-dehydrogenase (Acidithiobacillus ferrooxidans (strain ATCC 23270 / DSM 14882 / CIP 104768 / NCIMB 8455) (Ferrobacillus ferrooxidans (strain ATCC 23270))).